A 436-amino-acid polypeptide reads, in one-letter code: Trigger factor (436 aa).

Disordered stretches follow at residues 1-26 and 81-100; these read MQVS…RVEN and QESL…TGEG. One can recognise a PPIase FKBP-type domain in the interval 161–246; that stretch reads EDRVVIDFHG…VKRVEEPQLP (86 aa).

The protein belongs to the FKBP-type PPIase family. Tig subfamily.

It localises to the cytoplasm. The catalysed reaction is [protein]-peptidylproline (omega=180) = [protein]-peptidylproline (omega=0). Functionally, involved in protein export. Acts as a chaperone by maintaining the newly synthesized protein in an open conformation. Functions as a peptidyl-prolyl cis-trans isomerase. The chain is Trigger factor from Halorhodospira halophila (strain DSM 244 / SL1) (Ectothiorhodospira halophila (strain DSM 244 / SL1)).